Here is a 461-residue protein sequence, read N- to C-terminus: Chromosomal replication initiator protein DnaA (461 aa).

The domain I, interacts with DnaA modulators stretch occupies residues 1–90 (MAVSLWQQCI…RPSARPVAPA (90 aa)). Residues 91-124 (PVAAKPVNRQTKAQVGTTSFNTQAEPIINPNHRS) form a domain II region. Positions 125-341 (NINPTYQFDN…GALNRVIANA (217 aa)) are domain III, AAA+ region. Residues Gly-169, Gly-171, Lys-172, and Thr-173 each contribute to the ATP site. Residues 342 to 461 (NFTGRPITID…YANLIRTLSS (120 aa)) form a domain IV, binds dsDNA region.

The protein belongs to the DnaA family. As to quaternary structure, oligomerizes as a right-handed, spiral filament on DNA at oriC.

Its subcellular location is the cytoplasm. Functionally, plays an essential role in the initiation and regulation of chromosomal replication. ATP-DnaA binds to the origin of replication (oriC) to initiate formation of the DNA replication initiation complex once per cell cycle. Binds the DnaA box (a 9 base pair repeat at the origin) and separates the double-stranded (ds)DNA. Forms a right-handed helical filament on oriC DNA; dsDNA binds to the exterior of the filament while single-stranded (ss)DNA is stabiized in the filament's interior. The ATP-DnaA-oriC complex binds and stabilizes one strand of the AT-rich DNA unwinding element (DUE), permitting loading of DNA polymerase. After initiation quickly degrades to an ADP-DnaA complex that is not apt for DNA replication. Binds acidic phospholipids. The sequence is that of Chromosomal replication initiator protein DnaA from Shewanella frigidimarina (strain NCIMB 400).